A 458-amino-acid chain; its full sequence is V-type ATP synthase beta chain (458 aa).

It belongs to the ATPase alpha/beta chains family.

Its function is as follows. Produces ATP from ADP in the presence of a proton gradient across the membrane. The V-type beta chain is a regulatory subunit. In Enterococcus faecalis (strain ATCC 700802 / V583), this protein is V-type ATP synthase beta chain.